The chain runs to 653 residues: Fidgetin-like protein 2 (653 aa).

Disordered regions lie at residues 1–36 (MHWT…ELPP), 86–129 (ASFL…SGAL), and 216–240 (YGAL…APTP). The span at 10 to 27 (PLNQWPEQHLDVSSTTPS) shows a compositional bias: polar residues. Pro residues predominate over residues 97–107 (EPWPGPEPPYP). Residues 119 to 129 (KSGGGGGSGAL) show a composition bias toward gly residues. The span at 219–240 (LPPPPGPPPAPYLTPGLPAPTP) shows a compositional bias: pro residues. ATP is bound by residues Ala-395 and 435–440 (GAGKAL).

It belongs to the AAA ATPase family. It depends on Mg(2+) as a cofactor.

It localises to the cytoplasm. The protein resides in the cell cortex. The enzyme catalyses ATP + H2O = ADP + phosphate + H(+). Functionally, microtubule-severing enzyme that negatively regulates cell migration and wound healing. In migrating cells, targets dynamic microtubules (MTs) at the leading edge and severs them, thereby suppressing motility. Microtubule severing releases ARHGEF2 which activates RHOA, which in turn regulates focal ahesion turnover via focal adhesion kinase, as opposed to F-actin polymerization, to suppress cell motility. Negative regulator of axon regeneration that suppresses axonal growth by selectively severing dynamic MTs in the distal axon shaft and growth cone. Contributes to proper cell branching during endothelial and neuronal development. In Homo sapiens (Human), this protein is Fidgetin-like protein 2.